The chain runs to 311 residues: Malate dehydrogenase (311 aa).

NAD(+) is bound by residues 7-13 and D34; that span reads GAAGGIG. Substrate contacts are provided by R81 and R87. Residues N94 and 117–119 each bind NAD(+); that span reads ITN. The substrate site is built by N119 and R153. H177 (proton acceptor) is an active-site residue. Residue M227 coordinates NAD(+).

It belongs to the LDH/MDH superfamily. MDH type 1 family. Homodimer.

The catalysed reaction is (S)-malate + NAD(+) = oxaloacetate + NADH + H(+). Catalyzes the reversible oxidation of malate to oxaloacetate. This chain is Malate dehydrogenase, found in Shewanella denitrificans (strain OS217 / ATCC BAA-1090 / DSM 15013).